The following is a 390-amino-acid chain: 3-ketoacyl-CoA thiolase (390 aa).

Cysteine 95 acts as the Acyl-thioester intermediate in catalysis. Residues histidine 346 and cysteine 376 each act as proton acceptor in the active site.

The protein belongs to the thiolase-like superfamily. Thiolase family. In terms of assembly, heterotetramer of two alpha chains (FadB) and two beta chains (FadA).

It is found in the cytoplasm. The enzyme catalyses an acyl-CoA + acetyl-CoA = a 3-oxoacyl-CoA + CoA. The protein operates within lipid metabolism; fatty acid beta-oxidation. Catalyzes the final step of fatty acid oxidation in which acetyl-CoA is released and the CoA ester of a fatty acid two carbons shorter is formed. In Psychrobacter sp. (strain PRwf-1), this protein is 3-ketoacyl-CoA thiolase.